The following is a 202-amino-acid chain: MANLLFALAAYLIGSVSFAVVVSKLMGLPDPHSYGSGNPGATNVLRTGNKKAAILTLIGDALKGWLAVWLAARFGPAYGLNETGLAMVALAVFLGHLFPVYHRFAGGKGVATAAGILLAIDPILGLGTLATWLIIAFFFRYSSLAALVAAIFAPFFHVLMNGVDVMTGAIFVISVLLIARHRQNIAKLLAGKESRIGEKKKV.

Helical transmembrane passes span 2 to 22 (ANLL…AVVV), 80 to 100 (LNET…LFPV), 119 to 139 (AIDP…AFFF), and 158 to 178 (VLMN…VLLI).

It belongs to the PlsY family. As to quaternary structure, probably interacts with PlsX.

The protein localises to the cell inner membrane. The catalysed reaction is an acyl phosphate + sn-glycerol 3-phosphate = a 1-acyl-sn-glycero-3-phosphate + phosphate. It functions in the pathway lipid metabolism; phospholipid metabolism. Functionally, catalyzes the transfer of an acyl group from acyl-phosphate (acyl-PO(4)) to glycerol-3-phosphate (G3P) to form lysophosphatidic acid (LPA). This enzyme utilizes acyl-phosphate as fatty acyl donor, but not acyl-CoA or acyl-ACP. In Cupriavidus necator (strain ATCC 17699 / DSM 428 / KCTC 22496 / NCIMB 10442 / H16 / Stanier 337) (Ralstonia eutropha), this protein is Glycerol-3-phosphate acyltransferase.